A 355-amino-acid chain; its full sequence is Beta-1,2-mannobiose phosphorylase (355 aa).

Beta-D-Manp-(1-&gt;2)-beta-D-Manp-(1-&gt;2)-D-Manp is bound by residues Asn-31, Arg-46, Arg-89, 140–141 (ED), Lys-188, Tyr-273, and Asp-333.

It belongs to the glycosyl hydrolase 130 family. As to quaternary structure, homodimer.

The catalysed reaction is beta-D-mannopyranosyl-(1-&gt;2)-D-mannopyranose + phosphate = alpha-D-mannose 1-phosphate + D-mannose. In terms of biological role, catalyzes the reversible phosphorolysis of 1,2-beta-oligomannan. In phosphorolytic reactions, prefers beta-1,2-mannobiose (beta-1,2-Man2) as substrate, but can also use beta-1,2-mannotriose. The sequence is that of Beta-1,2-mannobiose phosphorylase from Listeria innocua serovar 6a (strain ATCC BAA-680 / CLIP 11262).